Here is a 287-residue protein sequence, read N- to C-terminus: NAD-dependent protein deacylase sir-2.3 (287 aa).

Residues 10-287 (TELCENSLKK…YRISDVLKEM (278 aa)) enclose the Deacetylase sirtuin-type domain. Residues 35–55 (GAGISTESGIPDYRSKDVGLY) and 116–119 (QNVD) contribute to the NAD(+) site. The Proton acceptor role is filled by H134. Zn(2+)-binding residues include C142, C145, C196, and C199. NAD(+) is bound by residues 236-238 (GTS), 262-264 (NIG), and I280.

Belongs to the sirtuin family. Class II subfamily. In terms of assembly, interacts with pyc-1, pcca-1 and mccc-1. Zn(2+) serves as cofactor. As to expression, ubiquitously expressed with high expression in the pharynx, body wall muscles and gonad. Strong expression in a subset of non-neuronal cells in the head.

It localises to the mitochondrion matrix. Its subcellular location is the mitochondrion. The enzyme catalyses N(6)-acetyl-L-lysyl-[protein] + NAD(+) + H2O = 2''-O-acetyl-ADP-D-ribose + nicotinamide + L-lysyl-[protein]. Functionally, NAD-dependent protein deacylase. Catalyzes the NAD-dependent hydrolysis of acyl groups from lysine residues. Plays a role in oxidative stress resistance. Might promote neuronal cell death under ischemic conditions and cell death in touch neurons induced by mec-4 channel hyperactivation, possibly downstream of the insulin-like receptor daf-2. Might attenuate the reactive oxygen species (ROS) scavenging system, that eliminates ROS in ischemic conditions, under dietary deprivation and when glycolysis is blocked. The polypeptide is NAD-dependent protein deacylase sir-2.3 (sir-2.3) (Caenorhabditis elegans).